Reading from the N-terminus, the 295-residue chain is Protoheme IX farnesyltransferase (295 aa).

The next 9 helical transmembrane spans lie at 7 to 27 (VTKPGIIFGNLISVIGGFLLA), 34 to 54 (VPLFILTMAGVSLVVASGCVF), 78 to 98 (LIAPGVSLWYASALGVAGIAL), 106 to 126 (LAALLAVLGFIVYVGVYSLYM), 131 to 151 (VYGTLVGSLSGAAPPVIGYCA), 161 to 181 (LILLAIFSLWQMPHSYAIAIF), 207 to 227 (ITLYILAFMVPTLMLFLGGYA), 228 to 248 (GYKYLIVATAVSVWWLGMALS), and 263 to 283 (LFMFSIVTITCLSVMMSVDFQ).

The protein belongs to the UbiA prenyltransferase family. Protoheme IX farnesyltransferase subfamily.

The protein resides in the cell inner membrane. It catalyses the reaction heme b + (2E,6E)-farnesyl diphosphate + H2O = Fe(II)-heme o + diphosphate. The protein operates within porphyrin-containing compound metabolism; heme O biosynthesis; heme O from protoheme: step 1/1. In terms of biological role, converts heme B (protoheme IX) to heme O by substitution of the vinyl group on carbon 2 of heme B porphyrin ring with a hydroxyethyl farnesyl side group. In Aeromonas salmonicida (strain A449), this protein is Protoheme IX farnesyltransferase.